We begin with the raw amino-acid sequence, 131 residues long: Small ribosomal subunit protein uS8 (131 aa).

The protein belongs to the universal ribosomal protein uS8 family. In terms of assembly, part of the 30S ribosomal subunit. Contacts proteins S5 and S12.

In terms of biological role, one of the primary rRNA binding proteins, it binds directly to 16S rRNA central domain where it helps coordinate assembly of the platform of the 30S subunit. The chain is Small ribosomal subunit protein uS8 from Vesicomyosocius okutanii subsp. Calyptogena okutanii (strain HA).